We begin with the raw amino-acid sequence, 255 residues long: Imidazole glycerol phosphate synthase subunit HisF (255 aa).

Catalysis depends on residues D13 and D132.

Belongs to the HisA/HisF family. In terms of assembly, heterodimer of HisH and HisF.

It is found in the cytoplasm. It carries out the reaction 5-[(5-phospho-1-deoxy-D-ribulos-1-ylimino)methylamino]-1-(5-phospho-beta-D-ribosyl)imidazole-4-carboxamide + L-glutamine = D-erythro-1-(imidazol-4-yl)glycerol 3-phosphate + 5-amino-1-(5-phospho-beta-D-ribosyl)imidazole-4-carboxamide + L-glutamate + H(+). It participates in amino-acid biosynthesis; L-histidine biosynthesis; L-histidine from 5-phospho-alpha-D-ribose 1-diphosphate: step 5/9. Functionally, IGPS catalyzes the conversion of PRFAR and glutamine to IGP, AICAR and glutamate. The HisF subunit catalyzes the cyclization activity that produces IGP and AICAR from PRFAR using the ammonia provided by the HisH subunit. This chain is Imidazole glycerol phosphate synthase subunit HisF, found in Leptospira biflexa serovar Patoc (strain Patoc 1 / ATCC 23582 / Paris).